The chain runs to 361 residues: Palmitoyltransferase ZDHHC2 (361 aa).

Residues 1–15 (MAPSGSRSFDCWRVL) are Cytoplasmic-facing. The helical transmembrane segment at 16-36 (YWIPVLFISLIVAWSYYAYVV) threads the bilayer. At 37–50 (QLCIETIENMGEKT) the chain is on the lumenal side. A helical transmembrane segment spans residues 51–71 (VYLLIYHLLFLMFVWSYWQTI). Residues 72 to 167 (YSKPMNPLKE…NNCVGFANYK (96 aa)) lie on the Cytoplasmic side of the membrane. The region spanning 124-174 (RYCDRCLLLKPDRCHHCSACDMCILKMDHHCPWVNNCVGFANYKFFMLFLA) is the DHHC domain. The active-site S-palmitoyl cysteine intermediate is Cys154. A helical transmembrane segment spans residues 168-188 (FFMLFLAYSLLYCLFVTATDM). Over 189–207 (QYFIQFWTNGLPDTQAKFH) the chain is Lumenal. A helical membrane pass occupies residues 208 to 228 (IMFLFFAASTFSVSLAFLFAY). The Cytoplasmic portion of the chain corresponds to 229–361 (HCWLVCKNRS…NPALTIEKET (133 aa)). The segment at 296–361 (NPDPEQPSIP…NPALTIEKET (66 aa)) is mediates localization to plasma membrane and recycling endosomes. Residues 299-308 (PEQPSIPPGR) are compositionally biased toward pro residues. The interval 299–361 (PEQPSIPPGR…NPALTIEKET (63 aa)) is disordered. Over residues 331-340 (SRLLNNGQTD) the composition is skewed to polar residues. The Non-canonical dileucine endocytic signal motif lies at 333–334 (LL). The short motif at 352–355 (NPAL) is the NPxY-like endocytic signal element.

Belongs to the DHHC palmitoyltransferase family. Monomer. Homodimer. The monomeric form has a higher catalytic activity. In terms of processing, autopalmitoylated.

It is found in the endoplasmic reticulum membrane. It localises to the golgi apparatus membrane. The protein localises to the postsynaptic density. Its subcellular location is the postsynaptic recycling endosome membrane. The protein resides in the cell membrane. It catalyses the reaction L-cysteinyl-[protein] + hexadecanoyl-CoA = S-hexadecanoyl-L-cysteinyl-[protein] + CoA. It carries out the reaction L-cysteinyl-[protein] + tetradecanoyl-CoA = S-tetradecanoyl-L-cysteinyl-[protein] + CoA. The enzyme catalyses L-cysteinyl-[protein] + octadecanoyl-CoA = S-octadecanoyl-L-cysteinyl-[protein] + CoA. Its function is as follows. Palmitoyltransferase that catalyzes the addition of palmitate onto various protein substrates and is involved in a variety of cellular processes. Has no stringent fatty acid selectivity and in addition to palmitate can also transfer onto target proteins myristate from tetradecanoyl-CoA and stearate from octadecanoyl-CoA. The sequence is that of Palmitoyltransferase ZDHHC2 from Danio rerio (Zebrafish).